The sequence spans 406 residues: Tryptophan synthase beta chain (406 aa).

Position 99 is an N6-(pyridoxal phosphate)lysine (K99).

The protein belongs to the TrpB family. Tetramer of two alpha and two beta chains. Requires pyridoxal 5'-phosphate as cofactor.

The enzyme catalyses (1S,2R)-1-C-(indol-3-yl)glycerol 3-phosphate + L-serine = D-glyceraldehyde 3-phosphate + L-tryptophan + H2O. The protein operates within amino-acid biosynthesis; L-tryptophan biosynthesis; L-tryptophan from chorismate: step 5/5. The beta subunit is responsible for the synthesis of L-tryptophan from indole and L-serine. This is Tryptophan synthase beta chain from Rhizobium etli (strain CIAT 652).